The sequence spans 1257 residues: LIM domain kinase 1 (1257 aa).

Positions 1–24 (MHHQQRLRANGGRGGTGLGAGSGP) are disordered. Positions 1–147 (MHHQQRLRAN…ERSKLYCGQC (147 aa)) are interaction with LATS1. The span at 11–24 (GGRGGTGLGAGSGP) shows a compositional bias: gly residues. LIM zinc-binding domains follow at residues 31 to 93 (PLCA…RFGD) and 94 to 154 (ACQQ…RSCQ). In terms of domain architecture, PDZ spans 174–274 (LVEIPKDATP…MLQLTVEHDP (101 aa)). One can recognise a Protein kinase domain in the interval 401-686 (LVIGEKLGEG…PCFETLHVWL (286 aa)). ATP contacts are provided by residues 407–415 (LGEGFFGKV) and Lys-430. Asp-522 is an active-site residue. 3 disordered regions span residues 552–587 (LPSG…RQRR), 759–811 (QDIP…ERAL), and 881–900 (EELL…QHHR). The segment covering 794–811 (QEERRNLTPDTESKERAL) has biased composition (basic and acidic residues). Phosphoserine is present on Ser-1000. Disordered stretches follow at residues 1010–1037 (AKQL…NPPL), 1085–1182 (SAQQ…EKVH), and 1212–1257 (AAGT…NTRC). Composition is skewed to polar residues over residues 1085 to 1095 (SAQQQRTSSNH) and 1113 to 1125 (RTGS…SNCV). Composition is skewed to low complexity over residues 1126 to 1137 (SPTRSSRPGSPT) and 1145 to 1166 (TAAT…HQQQ).

This sequence belongs to the protein kinase superfamily. TKL Ser/Thr protein kinase family. As to quaternary structure, interacts with LATS1, and this interaction inhibits phosphorylation of tsr/cofilin. Phosphorylated on serine and/or threonine residues by ROCK1. Phosphorylated by PAK4 resulting in increased LIMK1 ability to phosphorylate cofilin. May be dephosphorylated and inactivated by SSH1. In terms of tissue distribution, expressed throughout the imaginal disks of the eye, leg and wing.

The protein resides in the cytoplasm. Its subcellular location is the cleavage furrow. It localises to the midbody. It catalyses the reaction L-seryl-[protein] + ATP = O-phospho-L-seryl-[protein] + ADP + H(+). The enzyme catalyses L-threonyl-[protein] + ATP = O-phospho-L-threonyl-[protein] + ADP + H(+). Protein kinase which regulates actin filament dynamics. Phosphorylates and inactivates the actin binding/depolymerizing factor tsr/cofilin, thereby stabilizing the actin cytoskeleton. Modulation of actin cytoskeleton dynamics may be essential for imaginal disk morphogenesis and axon guidance. The polypeptide is LIM domain kinase 1 (LIMK1) (Drosophila melanogaster (Fruit fly)).